The primary structure comprises 529 residues: Peptide chain release factor 3 (529 aa).

The region spanning 11–280 (NSRRTFAIIS…AFINWAPEPK (270 aa)) is the tr-type G domain. GTP contacts are provided by residues 20–27 (SHPDAGKT), 88–92 (DTPGH), and 142–145 (NKMD).

It belongs to the TRAFAC class translation factor GTPase superfamily. Classic translation factor GTPase family. PrfC subfamily.

It localises to the cytoplasm. In terms of biological role, increases the formation of ribosomal termination complexes and stimulates activities of RF-1 and RF-2. It binds guanine nucleotides and has strong preference for UGA stop codons. It may interact directly with the ribosome. The stimulation of RF-1 and RF-2 is significantly reduced by GTP and GDP, but not by GMP. In Acinetobacter baylyi (strain ATCC 33305 / BD413 / ADP1), this protein is Peptide chain release factor 3.